A 350-amino-acid chain; its full sequence is Phenylalanine--tRNA ligase alpha subunit (350 aa).

Glu-257 provides a ligand contact to Mg(2+).

Belongs to the class-II aminoacyl-tRNA synthetase family. Phe-tRNA synthetase alpha subunit type 1 subfamily. As to quaternary structure, tetramer of two alpha and two beta subunits. It depends on Mg(2+) as a cofactor.

It is found in the cytoplasm. It carries out the reaction tRNA(Phe) + L-phenylalanine + ATP = L-phenylalanyl-tRNA(Phe) + AMP + diphosphate + H(+). The polypeptide is Phenylalanine--tRNA ligase alpha subunit (Listeria monocytogenes serovar 1/2a (strain ATCC BAA-679 / EGD-e)).